The following is a 188-amino-acid chain: Cytochrome b-245 chaperone 1 homolog (188 aa).

The helical transmembrane segment at 20-42 (SIRSWSLLVGILSVGLAAAYYST) threads the bilayer.

Belongs to the CYBC1 family.

The protein resides in the endoplasmic reticulum membrane. Functions as a chaperone necessary for a stable expression of the CYBA and CYBB subunits of the cytochrome b-245 heterodimer. The sequence is that of Cytochrome b-245 chaperone 1 homolog (cybc1) from Xenopus laevis (African clawed frog).